Consider the following 95-residue polypeptide: Large ribosomal subunit protein bL25 (95 aa).

Belongs to the bacterial ribosomal protein bL25 family. As to quaternary structure, part of the 50S ribosomal subunit; part of the 5S rRNA/L5/L18/L25 subcomplex. Contacts the 5S rRNA. Binds to the 5S rRNA independently of L5 and L18.

This is one of the proteins that binds to the 5S RNA in the ribosome where it forms part of the central protuberance. The chain is Large ribosomal subunit protein bL25 from Glaesserella parasuis serovar 5 (strain SH0165) (Haemophilus parasuis).